A 308-amino-acid chain; its full sequence is uncharacterized protein (308 aa).

10 helical membrane-spanning segments follow: residues leucine 45–leucine 65, serine 69–leucine 89, isoleucine 100–alanine 120, asparagine 122–tyrosine 142, valine 151–asparagine 171, isoleucine 172–serine 192, threonine 201–phenylalanine 221, phenylalanine 226–valine 246, alanine 263–alanine 283, and isoleucine 285–serine 305. EamA domains are found at residues leucine 52–glycine 166 and leucine 178–leucine 306.

This sequence belongs to the EamA transporter family.

It localises to the cell membrane. This is an uncharacterized protein from Archaeoglobus fulgidus (strain ATCC 49558 / DSM 4304 / JCM 9628 / NBRC 100126 / VC-16).